The sequence spans 233 residues: Small ribosomal subunit protein uS5 (233 aa).

Basic and acidic residues-rich tracts occupy residues 1–12 (MANESEIQKTEN) and 39–54 (RGRD…RNEE). The tract at residues 1–54 (MANESEIQKTENAEVANAANGTNPNNERRGRGGRGRGGRGRDGRGRRDDRRNEE) is disordered. Residues 59–122 (LIEKLVHINR…AAAKKTMIRV (64 aa)) enclose the S5 DRBM domain.

This sequence belongs to the universal ribosomal protein uS5 family. As to quaternary structure, part of the 30S ribosomal subunit. Contacts proteins S4 and S8.

With S4 and S12 plays an important role in translational accuracy. In terms of biological role, located at the back of the 30S subunit body where it stabilizes the conformation of the head with respect to the body. The chain is Small ribosomal subunit protein uS5 from Zymomonas mobilis subsp. mobilis (strain ATCC 31821 / ZM4 / CP4).